A 136-amino-acid polypeptide reads, in one-letter code: Aspartate 1-decarboxylase (136 aa).

S25 functions as the Schiff-base intermediate with substrate; via pyruvic acid in the catalytic mechanism. Pyruvic acid (Ser) is present on S25. T57 lines the substrate pocket. Catalysis depends on Y58, which acts as the Proton donor. 73–75 contacts substrate; that stretch reads GAA. Positions 117 to 136 are disordered; the sequence is IFQLGEETTPEEAPSLEQRN.

The protein belongs to the PanD family. In terms of assembly, heterooctamer of four alpha and four beta subunits. The cofactor is pyruvate. Post-translationally, is synthesized initially as an inactive proenzyme, which is activated by self-cleavage at a specific serine bond to produce a beta-subunit with a hydroxyl group at its C-terminus and an alpha-subunit with a pyruvoyl group at its N-terminus.

The protein resides in the cytoplasm. The enzyme catalyses L-aspartate + H(+) = beta-alanine + CO2. It functions in the pathway cofactor biosynthesis; (R)-pantothenate biosynthesis; beta-alanine from L-aspartate: step 1/1. In terms of biological role, catalyzes the pyruvoyl-dependent decarboxylation of aspartate to produce beta-alanine. The chain is Aspartate 1-decarboxylase from Chloroherpeton thalassium (strain ATCC 35110 / GB-78).